A 178-amino-acid polypeptide reads, in one-letter code: Protein PilI (178 aa).

One can recognise a CheW-like domain in the interval 34–173 (SWSGIGFRMG…PHALAQHQGF (140 aa)).

Functionally, may be a part of a signal-transduction system that regulates twitching motility by controlling pilus function (extension and retraction). This Pseudomonas aeruginosa (strain ATCC 15692 / DSM 22644 / CIP 104116 / JCM 14847 / LMG 12228 / 1C / PRS 101 / PAO1) protein is Protein PilI (pilI).